The chain runs to 341 residues: L-threonine 3-dehydrogenase (341 aa).

Cys-38 is a binding site for Zn(2+). Catalysis depends on charge relay system residues Thr-40 and His-43. Zn(2+)-binding residues include His-63, Glu-64, Cys-93, Cys-96, Cys-99, and Cys-107. Residues Ile-175, Asp-195, Arg-200, 262-264 (LGI), and 286-287 (IY) each bind NAD(+).

It belongs to the zinc-containing alcohol dehydrogenase family. Homotetramer. Zn(2+) is required as a cofactor.

The protein localises to the cytoplasm. It carries out the reaction L-threonine + NAD(+) = (2S)-2-amino-3-oxobutanoate + NADH + H(+). It participates in amino-acid degradation; L-threonine degradation via oxydo-reductase pathway; glycine from L-threonine: step 1/2. Catalyzes the NAD(+)-dependent oxidation of L-threonine to 2-amino-3-ketobutyrate. This Shewanella baltica (strain OS223) protein is L-threonine 3-dehydrogenase.